The following is a 118-amino-acid chain: Large ribosomal subunit protein bL20 (118 aa).

The protein belongs to the bacterial ribosomal protein bL20 family.

Functionally, binds directly to 23S ribosomal RNA and is necessary for the in vitro assembly process of the 50S ribosomal subunit. It is not involved in the protein synthesizing functions of that subunit. The sequence is that of Large ribosomal subunit protein bL20 from Macrococcus caseolyticus (strain JCSC5402) (Macrococcoides caseolyticum).